The chain runs to 91 residues: Small ribosomal subunit protein bS18 (91 aa).

It belongs to the bacterial ribosomal protein bS18 family. In terms of assembly, part of the 30S ribosomal subunit. Forms a tight heterodimer with protein bS6.

Functionally, binds as a heterodimer with protein bS6 to the central domain of the 16S rRNA, where it helps stabilize the platform of the 30S subunit. The chain is Small ribosomal subunit protein bS18 from Paraburkholderia xenovorans (strain LB400).